The chain runs to 128 residues: Small ribosomal subunit protein uS11 (128 aa).

It belongs to the universal ribosomal protein uS11 family. As to quaternary structure, part of the 30S ribosomal subunit. Interacts with proteins S7 and S18. Binds to IF-3.

In terms of biological role, located on the platform of the 30S subunit, it bridges several disparate RNA helices of the 16S rRNA. Forms part of the Shine-Dalgarno cleft in the 70S ribosome. The polypeptide is Small ribosomal subunit protein uS11 (Methylococcus capsulatus (strain ATCC 33009 / NCIMB 11132 / Bath)).